Here is a 205-residue protein sequence, read N- to C-terminus: Guanylate kinase (205 aa).

The Guanylate kinase-like domain maps to 5–183 (GTLYTVSAPS…ALTEFRSIVV (179 aa)). 12 to 19 (APSGAGKT) lines the ATP pocket.

Belongs to the guanylate kinase family.

The protein localises to the cytoplasm. The enzyme catalyses GMP + ATP = GDP + ADP. In terms of biological role, essential for recycling GMP and indirectly, cGMP. The polypeptide is Guanylate kinase (Saccharophagus degradans (strain 2-40 / ATCC 43961 / DSM 17024)).